We begin with the raw amino-acid sequence, 154 residues long: Small ribosomal subunit protein uS9 (154 aa).

Disordered regions lie at residues 1–33 and 115–154; these read MVPPQRAKNDTSSAPDSAAETRGPLVSSGSGLG and PENNRKPLKSAGFLTRDSRVKERKKAGLKKARKAPQYSKR. The span at 135 to 154 shows a compositional bias: basic residues; sequence KERKKAGLKKARKAPQYSKR.

It belongs to the universal ribosomal protein uS9 family.

This chain is Small ribosomal subunit protein uS9, found in Tropheryma whipplei (strain TW08/27) (Whipple's bacillus).